The sequence spans 251 residues: NAD kinase (251 aa).

Aspartate 51 (proton acceptor) is an active-site residue. NAD(+)-binding positions include 51–52, lysine 56, 113–114, lysine 124, histidine 140, aspartate 142, 153–158, and alanine 177; these read DG, NE, and TGYSLS.

Belongs to the NAD kinase family. The cofactor is a divalent metal cation.

Its subcellular location is the cytoplasm. It catalyses the reaction NAD(+) + ATP = ADP + NADP(+) + H(+). Functionally, involved in the regulation of the intracellular balance of NAD and NADP, and is a key enzyme in the biosynthesis of NADP. Catalyzes specifically the phosphorylation on 2'-hydroxyl of the adenosine moiety of NAD to yield NADP. The chain is NAD kinase from Thermosipho melanesiensis (strain DSM 12029 / CIP 104789 / BI429).